The chain runs to 276 residues: Replication protein A 32 kDa subunit-A (276 aa).

Positions Gly19–Gly31 are enriched in gly residues. The segment at Gly19–Gln47 is disordered. The OB DNA-binding region spans Val77–Pro151.

This sequence belongs to the replication factor A protein 2 family. In terms of assembly, component of the replication protein A complex (RPA/RP-A), a heterotrimeric complex composed of RPA1, RPA2 and RPA3. In terms of processing, differentially phosphorylated throughout the cell cycle, becoming phosphorylated at the G1-S transition and dephosphorylated in late mitosis. Phosphorylation increases upon replication fork stalling.

It is found in the nucleus. The protein localises to the PML body. Functionally, as part of the heterotrimeric replication protein A complex (RPA/RP-A), binds and stabilizes single-stranded DNA intermediates, that form during DNA replication or upon DNA stress. It prevents their reannealing and in parallel, recruits and activates different proteins and complexes involved in DNA metabolism. Thereby, it plays an essential role both in DNA replication and the cellular response to DNA damage. This is Replication protein A 32 kDa subunit-A (rpa2-a) from Xenopus laevis (African clawed frog).